We begin with the raw amino-acid sequence, 233 residues long: Auxin-responsive protein IAA11 (233 aa).

2 disordered regions span residues 1–27 and 46–100; these read MAGL…RSSG and PAAV…PKAQ. Residues 11–15 carry the EAR-like (transcriptional repression) motif; the sequence is LRLGL. The segment covering 54–63 has biased composition (acidic residues); it reads GAQEDKEDAD. Residues 122–217 form the PB1 domain; it reads AALVKVSMDG…SCKRLRIMKG (96 aa).

Belongs to the Aux/IAA family. As to quaternary structure, homodimers and heterodimers. Highly expressed in etiolated shoots. Expressed in roots.

The protein resides in the nucleus. Functionally, aux/IAA proteins are short-lived transcriptional factors that function as repressors of early auxin response genes at low auxin concentrations. This chain is Auxin-responsive protein IAA11 (IAA11), found in Oryza sativa subsp. japonica (Rice).